The following is a 91-amino-acid chain: MIDKQKTIQTYAKSANDTGSTAVQVALLTERINNLSRHLTENKKDKHGQRGLQLLNGQRRRLLKYLERTNYDEYIALTDRLGIRRGQRIVR.

This sequence belongs to the universal ribosomal protein uS15 family. Part of the 30S ribosomal subunit. Forms a bridge to the 50S subunit in the 70S ribosome, contacting the 23S rRNA.

Functionally, one of the primary rRNA binding proteins, it binds directly to 16S rRNA where it helps nucleate assembly of the platform of the 30S subunit by binding and bridging several RNA helices of the 16S rRNA. In terms of biological role, forms an intersubunit bridge (bridge B4) with the 23S rRNA of the 50S subunit in the ribosome. This chain is Small ribosomal subunit protein uS15, found in Deinococcus geothermalis (strain DSM 11300 / CIP 105573 / AG-3a).